The chain runs to 289 residues: Acetyl-coenzyme A carboxylase carboxyl transferase subunit beta (289 aa).

The CoA carboxyltransferase N-terminal domain occupies 34 to 289 (MWVKCNKCGE…KLINMHKNSF (256 aa)). The Zn(2+) site is built by Cys-38, Cys-41, Cys-57, and Cys-60. The C4-type zinc-finger motif lies at 38-60 (CNKCGEILYQNDLEKNYMACNLC).

This sequence belongs to the AccD/PCCB family. In terms of assembly, acetyl-CoA carboxylase is a heterohexamer composed of biotin carboxyl carrier protein (AccB), biotin carboxylase (AccC) and two subunits each of ACCase subunit alpha (AccA) and ACCase subunit beta (AccD). It depends on Zn(2+) as a cofactor.

It is found in the cytoplasm. The catalysed reaction is N(6)-carboxybiotinyl-L-lysyl-[protein] + acetyl-CoA = N(6)-biotinyl-L-lysyl-[protein] + malonyl-CoA. It functions in the pathway lipid metabolism; malonyl-CoA biosynthesis; malonyl-CoA from acetyl-CoA: step 1/1. Component of the acetyl coenzyme A carboxylase (ACC) complex. Biotin carboxylase (BC) catalyzes the carboxylation of biotin on its carrier protein (BCCP) and then the CO(2) group is transferred by the transcarboxylase to acetyl-CoA to form malonyl-CoA. In Clostridium botulinum (strain Loch Maree / Type A3), this protein is Acetyl-coenzyme A carboxylase carboxyl transferase subunit beta.